The sequence spans 139 residues: MDKVKKSDQEWRQQLTDEQYRVTRGKGTERPFTGEYYDTKEAGVYVCVCCGEPLFTSENKYDSGCGWPSFWAPMDKEKITEEIDMSHMMVRTEILCSKCDAHLGHVFDDGPQPTGQRYCVNSASLRFHSADGDAKQEDE.

The MsrB domain occupies 8–130 (DQEWRQQLTD…NSASLRFHSA (123 aa)). Residues Cys-47, Cys-50, Cys-96, and Cys-99 each coordinate Zn(2+). Catalysis depends on Cys-119, which acts as the Nucleophile.

It belongs to the MsrB Met sulfoxide reductase family. Zn(2+) is required as a cofactor.

It carries out the reaction L-methionyl-[protein] + [thioredoxin]-disulfide + H2O = L-methionyl-(R)-S-oxide-[protein] + [thioredoxin]-dithiol. The chain is Peptide methionine sulfoxide reductase MsrB from Hahella chejuensis (strain KCTC 2396).